The sequence spans 535 residues: Palmdelphin (535 aa).

A coiled-coil region spans residues M1 to E105. The interval V423–S450 is disordered. The segment covering V424 to E436 has biased composition (acidic residues). Residues A437 to K446 are compositionally biased toward basic and acidic residues.

The protein belongs to the paralemmin family.

It localises to the cytoplasm. It is found in the cell projection. The protein resides in the dendrite. Its subcellular location is the dendritic spine. The polypeptide is Palmdelphin (palmd) (Xenopus laevis (African clawed frog)).